The chain runs to 352 residues: C-C chemokine receptor type 5 (352 aa).

Residues 1–30 (MDYQVSSPTYDIDYYTSGPCQKINVKQIAA) lie on the Extracellular side of the membrane. The residue at position 3 (Tyr-3) is a Sulfotyrosine. 2 O-linked (GalNAc...) serine glycosylation sites follow: Ser-6 and Ser-7. Sulfotyrosine is present on residues Tyr-10, Tyr-14, and Tyr-15. 2 disulfides stabilise this stretch: Cys-20/Cys-269 and Cys-101/Cys-178. Residues 31-58 (RLLPPLYSLVFIFGFVGNMLVILILINC) form a helical membrane-spanning segment. At 59-68 (KRLKSMTDIY) the chain is on the cytoplasmic side. Residues 69–89 (LLNLAISDLFFLLTVPFWAHY) traverse the membrane as a helical segment. The Extracellular segment spans residues 90-102 (AAAQWDFGNTMCQ). A helical transmembrane segment spans residues 103-124 (LLTGLYFIGFFSGIFFIILLTI). Over 125–141 (DRYLAIVHAVFALKART) the chain is Cytoplasmic. A helical transmembrane segment spans residues 142 to 166 (VTFGVVTSVITWVVAVFASLPGIIF). The Extracellular portion of the chain corresponds to 167-198 (TRSQKEGLHYTCSSHFPYSQYQFWKNFQTLKI). Residues 199-218 (VILGLVLPLLVMVICYSGIL) traverse the membrane as a helical segment. Residues 219 to 235 (KTLLRCRNEKKRHRAVR) are Cytoplasmic-facing. The chain crosses the membrane as a helical span at residues 236–260 (LIFTIMIVYFLFWAPYNIVLLLNTF). The Extracellular segment spans residues 261–277 (QEFFGLNNCSSSNRLDQ). Residues 278–301 (AMQVTETLGMTHCCINPIIYAFVG) form a helical membrane-spanning segment. The Cytoplasmic segment spans residues 302–352 (EKFRNYLLVFFQKHIAKHFCKCCSIFQQEAPERASSVYTRSTGEQEISVGL). S-palmitoyl cysteine attachment occurs at residues Cys-321, Cys-323, and Cys-324. 4 positions are modified to phosphoserine; by BARK1: Ser-336, Ser-337, Ser-342, and Ser-349.

The protein belongs to the G-protein coupled receptor 1 family. In terms of assembly, interacts with PRAF2. Efficient ligand binding to CCL3/MIP-1alpha and CCL4/MIP-1beta requires sulfation, O-glycosylation and sialic acid modifications. Glycosylation on Ser-6 is required for efficient binding of CCL4. Interacts with GRK2. Interacts with ARRB1 and ARRB2. Interacts with CNIH4. Interacts with S100A4; this interaction stimulates T-lymphocyte chemotaxis. In terms of processing, sulfated on at least 2 of the N-terminal tyrosines. Sulfation is required for efficient binding of the chemokines, CCL3 and CCL4. Palmitoylation in the C-terminal is important for cell surface expression. Post-translationally, phosphorylation on serine residues in the C-terminal is stimulated by binding CC chemokines especially by APO-RANTES. In terms of processing, O-glycosylated, but not N-glycosylated. Ser-6 appears to be the major site even if Ser-7 may be also O-glycosylated. Also sialylated glycans present which contribute to chemokine binding. Thr-16 and Ser-17 may also be glycosylated and, if so, with small moieties such as a T-antigen.

It is found in the cell membrane. Receptor for a number of inflammatory CC-chemokines including CCL3/MIP-1-alpha, CCL4/MIP-1-beta and RANTES and subsequently transduces a signal by increasing the intracellular calcium ion level. May play a role in the control of granulocytic lineage proliferation or differentiation. Participates in T-lymphocyte migration to the infection site by acting as a chemotactic receptor. This chain is C-C chemokine receptor type 5 (CCR5), found in Hylobates moloch (Silvery gibbon).